The chain runs to 279 residues: Tryptophan synthase alpha chain (279 aa).

Residues Glu-63 and Asp-74 each act as proton acceptor in the active site.

It belongs to the TrpA family. In terms of assembly, tetramer of two alpha and two beta chains.

The catalysed reaction is (1S,2R)-1-C-(indol-3-yl)glycerol 3-phosphate + L-serine = D-glyceraldehyde 3-phosphate + L-tryptophan + H2O. It functions in the pathway amino-acid biosynthesis; L-tryptophan biosynthesis; L-tryptophan from chorismate: step 5/5. Its function is as follows. The alpha subunit is responsible for the aldol cleavage of indoleglycerol phosphate to indole and glyceraldehyde 3-phosphate. The polypeptide is Tryptophan synthase alpha chain (Prochlorococcus marinus subsp. pastoris (strain CCMP1986 / NIES-2087 / MED4)).